We begin with the raw amino-acid sequence, 100 residues long: Urease subunit gamma (100 aa).

This sequence belongs to the urease gamma subunit family. In terms of assembly, heterotrimer of UreA (gamma), UreB (beta) and UreC (alpha) subunits. Three heterotrimers associate to form the active enzyme.

Its subcellular location is the cytoplasm. It catalyses the reaction urea + 2 H2O + H(+) = hydrogencarbonate + 2 NH4(+). The protein operates within nitrogen metabolism; urea degradation; CO(2) and NH(3) from urea (urease route): step 1/1. The protein is Urease subunit gamma of Polaromonas naphthalenivorans (strain CJ2).